The chain runs to 467 residues: Microtubule-associated tyrosine carboxypeptidase 1 (467 aa).

Positions 1–10 (MVLDSGTQVY) are enriched in polar residues. Disordered regions lie at residues 1–40 (MVLD…PLYP) and 77–111 (MRRS…TLRP). Residue histidine 276 participates in Zn(2+) binding. The Nucleophile role is filled by glutamate 277. Histidine 281 and glutamate 312 together coordinate Zn(2+).

Belongs to the peptidase MATCAP family. Zn(2+) is required as a cofactor.

The protein localises to the cytoplasm. The protein resides in the cytoskeleton. The catalysed reaction is C-terminal L-alpha-aminoacyl-L-glutamyl-L-glutamyl-L-tyrosyl-[tubulin] + H2O = C-terminal L-alpha-aminoacyl-L-glutamyl-L-glutamyl-[tubulin] + L-tyrosine. It carries out the reaction C-terminal L-alpha-aminoacyl-L-glutamyl-L-glutamyl-L-phenylalanyl-[tubulin] + H2O = C-terminal L-alpha-aminoacyl-L-glutamyl-L-glutamyl-[tubulin] + L-phenylalanine. Tyrosine carboxypeptidase that removes the C-terminal tyrosine residue of alpha-tubulin, thereby regulating microtubule dynamics and function. Also able to remove the C-terminal phenylalanine residue of alpha-tubulin TUBA8. Recognizes adjacent tubulin dimers along the same protofilament. The chain is Microtubule-associated tyrosine carboxypeptidase 1 from Mus musculus (Mouse).